A 632-amino-acid polypeptide reads, in one-letter code: DNA gyrase subunit B (632 aa).

In terms of domain architecture, Toprim spans 419–533; it reads RELFIVEGES…SGYLYIAQPP (115 aa). Residues E425, D498, and D500 each contribute to the Mg(2+) site.

Belongs to the type II topoisomerase GyrB family. As to quaternary structure, heterotetramer, composed of two GyrA and two GyrB chains. In the heterotetramer, GyrA contains the active site tyrosine that forms a transient covalent intermediate with DNA, while GyrB binds cofactors and catalyzes ATP hydrolysis. It depends on Mg(2+) as a cofactor. Requires Mn(2+) as cofactor. Ca(2+) is required as a cofactor.

Its subcellular location is the cytoplasm. It catalyses the reaction ATP-dependent breakage, passage and rejoining of double-stranded DNA.. In terms of biological role, a type II topoisomerase that negatively supercoils closed circular double-stranded (ds) DNA in an ATP-dependent manner to modulate DNA topology and maintain chromosomes in an underwound state. Negative supercoiling favors strand separation, and DNA replication, transcription, recombination and repair, all of which involve strand separation. Also able to catalyze the interconversion of other topological isomers of dsDNA rings, including catenanes and knotted rings. Type II topoisomerases break and join 2 DNA strands simultaneously in an ATP-dependent manner. This chain is DNA gyrase subunit B, found in Archaeoglobus fulgidus (strain ATCC 49558 / DSM 4304 / JCM 9628 / NBRC 100126 / VC-16).